Reading from the N-terminus, the 442-residue chain is tRNA-2-methylthio-N(6)-dimethylallyladenosine synthase (442 aa).

Residues 3–120 form the MTTase N-terminal domain; sequence KKLYIETHGC…LPEMIDAARV (118 aa). Residues Cys12, Cys49, Cys83, Cys157, Cys161, and Cys164 each coordinate [4Fe-4S] cluster. One can recognise a Radical SAM core domain in the interval 143–375; it reads RVDGPSAYVS…QHRLNQQGFE (233 aa). A TRAM domain is found at 378–442; the sequence is RQMVGSIQRI…PHSLRGSLLQ (65 aa).

The protein belongs to the methylthiotransferase family. MiaB subfamily. Monomer. Requires [4Fe-4S] cluster as cofactor.

Its subcellular location is the cytoplasm. It carries out the reaction N(6)-dimethylallyladenosine(37) in tRNA + (sulfur carrier)-SH + AH2 + 2 S-adenosyl-L-methionine = 2-methylsulfanyl-N(6)-dimethylallyladenosine(37) in tRNA + (sulfur carrier)-H + 5'-deoxyadenosine + L-methionine + A + S-adenosyl-L-homocysteine + 2 H(+). Catalyzes the methylthiolation of N6-(dimethylallyl)adenosine (i(6)A), leading to the formation of 2-methylthio-N6-(dimethylallyl)adenosine (ms(2)i(6)A) at position 37 in tRNAs that read codons beginning with uridine. The chain is tRNA-2-methylthio-N(6)-dimethylallyladenosine synthase from Pseudomonas syringae pv. syringae (strain B728a).